We begin with the raw amino-acid sequence, 335 residues long: Phosphate acyltransferase (335 aa).

This sequence belongs to the PlsX family. Homodimer. Probably interacts with PlsY.

The protein localises to the cytoplasm. The catalysed reaction is a fatty acyl-[ACP] + phosphate = an acyl phosphate + holo-[ACP]. Its pathway is lipid metabolism; phospholipid metabolism. Catalyzes the reversible formation of acyl-phosphate (acyl-PO(4)) from acyl-[acyl-carrier-protein] (acyl-ACP). This enzyme utilizes acyl-ACP as fatty acyl donor, but not acyl-CoA. The chain is Phosphate acyltransferase from Streptococcus pyogenes serotype M18 (strain MGAS8232).